We begin with the raw amino-acid sequence, 1178 residues long: Topoisomerase 1-associated factor 1 (1178 aa).

4 disordered regions span residues 576–596 (KQDD…DEEL), 792–811 (SWES…PMIP), 896–965 (DARG…VLEE), and 980–1178 (KIKS…SDSE). The segment covering 580–596 (QAIDVEDEEHASEDEEL) has biased composition (acidic residues). The segment covering 896 to 905 (DARGGGRDEQ) has biased composition (basic and acidic residues). The span at 911–921 (FGSDSEGEDNV) shows a compositional bias: acidic residues. Basic and acidic residues-rich tracts occupy residues 981-991 (IKSDLYIHASD), 1001-1015 (EFFR…EQAA), and 1025-1034 (VVEEISDKSS). A compositionally biased stretch (polar residues) spans 1079–1092 (EAQSPDSPGLGSSS). The span at 1105-1116 (SDEDELEFDDDL) shows a compositional bias: acidic residues. The segment covering 1117-1128 (AFSRDRNRRKDF) has biased composition (basic and acidic residues). Residues 1138-1147 (EPAQQDADPA) show a composition bias toward low complexity. The segment covering 1148-1157 (APDEDDDEDA) has biased composition (acidic residues).

Belongs to the timeless family. Component of the fork protection complex (FPC) consisting of tof1 and csm3.

It localises to the nucleus. Functionally, forms a fork protection complex (FPC) with csm3 and which is required for chromosome segregation during meiosis and DNA damage repair. FPC coordinates leading and lagging strand synthesis and moves with the replication fork. FPC stabilizes replication forks in a configuration that is recognized by replication checkpoint sensors. This chain is Topoisomerase 1-associated factor 1 (tof1), found in Aspergillus clavatus (strain ATCC 1007 / CBS 513.65 / DSM 816 / NCTC 3887 / NRRL 1 / QM 1276 / 107).